The primary structure comprises 516 residues: UDP-N-acetylmuramyl-tripeptide synthetase (516 aa).

UDP-N-acetyl-alpha-D-muramoyl-L-alanyl-D-glutamate is bound at residue Ser-36. Residue 113 to 119 (GTKGKTT) coordinates ATP. Residues 159 to 160 (TT), Ser-186, and Arg-194 each bind UDP-N-acetyl-alpha-D-muramoyl-L-alanyl-D-glutamate. The residue at position 228 (Lys-228) is an N6-carboxylysine.

This sequence belongs to the MurCDEF family. MurE subfamily. Carboxylation is probably crucial for Mg(2+) binding and, consequently, for the gamma-phosphate positioning of ATP.

Its subcellular location is the cytoplasm. The protein operates within cell wall biogenesis; peptidoglycan biosynthesis. Functionally, catalyzes the addition of an amino acid to the nucleotide precursor UDP-N-acetylmuramoyl-L-alanyl-D-glutamate (UMAG) in the biosynthesis of bacterial cell-wall peptidoglycan. This chain is UDP-N-acetylmuramyl-tripeptide synthetase, found in Limosilactobacillus reuteri (strain DSM 20016) (Lactobacillus reuteri).